A 202-amino-acid polypeptide reads, in one-letter code: Urease accessory protein UreG (202 aa).

Residue 13 to 20 participates in GTP binding; the sequence is GPVGAGKT.

It belongs to the SIMIBI class G3E GTPase family. UreG subfamily. In terms of assembly, homodimer. UreD, UreF and UreG form a complex that acts as a GTP-hydrolysis-dependent molecular chaperone, activating the urease apoprotein by helping to assemble the nickel containing metallocenter of UreC. The UreE protein probably delivers the nickel.

The protein resides in the cytoplasm. Functionally, facilitates the functional incorporation of the urease nickel metallocenter. This process requires GTP hydrolysis, probably effectuated by UreG. In Dinoroseobacter shibae (strain DSM 16493 / NCIMB 14021 / DFL 12), this protein is Urease accessory protein UreG.